A 707-amino-acid polypeptide reads, in one-letter code: Serine/threonine protein kinase UL97 (707 aa).

Residues 1–14 (MSSALRSRARSASL) show a composition bias toward low complexity. Disordered regions lie at residues 1 to 32 (MSSA…PSRA), 113 to 147 (DGEK…DGYH), 176 to 199 (FTGG…PLRP), and 231 to 264 (ESQD…EADS). A compositionally biased stretch (basic and acidic residues) spans 113 to 127 (DGEKEDAASDKENQR). Positions 178–188 (GGSDPSDSVSG) are enriched in low complexity. The active-site Proton acceptor is aspartate 456.

The protein belongs to the protein kinase superfamily. Tyr protein kinase family. HCMV ganciclovir subfamily. Interacts with UL83. Post-translationally, autophosphorylates on serine and threonine residues.

It is found in the virion. The enzyme catalyses L-seryl-[protein] + ATP = O-phospho-L-seryl-[protein] + ADP + H(+). The catalysed reaction is L-threonyl-[protein] + ATP = O-phospho-L-threonyl-[protein] + ADP + H(+). In terms of biological role, serine/threonine protein kinase that plays important roles in several processes including nuclear viral egress, viral replication or regulation of host cell cycle progression. Participates in the acquisition of tegument during virion morphogenesis in the nucleus. Redistributes the host nuclear lamina by phosphorylating cellular Lamins-A/C. Plays a role in viral DNA synthesis by phosphorylating the DNA polymerase processivity factor UL44. Stimulates host cell cycle to support viral DNA synthesis by phosphorylating host retinoblastoma/RB1 protein. Additional substrates have been identified including host EF1D or H2B. Also phosphorylates host SAMHD1 and thereby counteracts its antiviral effect by reducing its dNTP hydrolase activity. The protein is Serine/threonine protein kinase UL97 (UL97) of Homo sapiens (Human).